Reading from the N-terminus, the 268-residue chain is Exopolysaccharide production negative regulator (268 aa).

An N-terminal signal peptide occupies residues 1–22 (MRAGELKSLRVAVLGMSLAVGA).

Its function is as follows. Negatively modulates exopolysaccharide (EPS) biosynthesis. The sequence is that of Exopolysaccharide production negative regulator (exoR) from Rhizobium meliloti (strain 1021) (Ensifer meliloti).